The primary structure comprises 335 residues: Spliceosome-associated protein 49 (335 aa).

2 consecutive RRM domains span residues 13–84 and 101–172; these read IYLG…PIRV and LFVG…PITV. The segment at 204–223 is disordered; sequence VTPQSTLPPGFSPATPAPTS.

The protein belongs to the SF3B4 family.

It localises to the nucleus. This is Spliceosome-associated protein 49 (sap49) from Schizosaccharomyces pombe (strain 972 / ATCC 24843) (Fission yeast).